Reading from the N-terminus, the 336-residue chain is Major histocompatibility complex class I-related protein 1 (336 aa).

An N-terminal signal peptide occupies residues 1-18; it reads MMLLLPLIIVLMMKLSDA. Positions 19-105 are alpha-1; sequence RTHSLRYFRL…KQLQHHYNHS (87 aa). The antigen-binding cleft stretch occupies residues 19–197; it reads RTHSLRYFRL…EYGKDALQRT (179 aa). The Extracellular segment spans residues 19 to 298; that stretch reads RTHSLRYFRL…QESETILLVV (280 aa). 8-(9H-purin-6-yl)-2-oxa-8-azabicyclo[3.3.1]nona-3,6-diene-4,6-dicarbaldehyde contacts are provided by Y25 and R27. Residues R27, S42, and K61 each coordinate 5-(2-oxoethylideneamino)-6-(D-ribitylamino)uracil. The 5-(2-oxopropylideneamino)-6-(D-ribitylamino)uracil site is built by R27, S42, and K61. The 7-hydroxy-6-methyl-8-(1-D-ribityl)lumazine site is built by R27, S42, and K61. 8-(9H-purin-6-yl)-2-oxa-8-azabicyclo[3.3.1]nona-3,6-diene-4,6-dicarbaldehyde is bound by residues K61 and H76. K61 is a binding site for 2-amino-4-oxopteridine-6-carbaldehyde. Position 61 (K61) interacts with pyridoxal. N103 carries N-linked (GlcNAc...) asparagine glycosylation. The segment at 106 to 197 is alpha-2; the sequence is GFHTYQRMIG…EYGKDALQRT (92 aa). R112 is an 8-(9H-purin-6-yl)-2-oxa-8-azabicyclo[3.3.1]nona-3,6-diene-4,6-dicarbaldehyde binding site. The 5-(2-oxoethylideneamino)-6-(D-ribitylamino)uracil site is built by R112, Y170, and Q171. Positions 112, 170, and 171 each coordinate 5-(2-oxopropylideneamino)-6-(D-ribitylamino)uracil. Residues R112, Y170, and Q171 each coordinate 7-hydroxy-6-methyl-8-(1-D-ribityl)lumazine. 2 disulfides stabilise this stretch: C116/C179 and C218/C274. The segment at 198 to 289 is alpha-3; the sequence is EPPKVRVNHK…GVHMVLQGFQ (92 aa). The region spanning 200–295 is the Ig-like C1-type domain; the sequence is PKVRVNHKET…QGFQESETIL (96 aa). The connecting peptide stretch occupies residues 290–298; that stretch reads ESETILLVV. A helical transmembrane segment spans residues 299–319; that stretch reads KAVGFIVLAIALAGVGILAWR. At 320 to 336 the chain is on the cytoplasmic side; it reads KRPRGKNKVICLSTPEH.

Belongs to the MHC class I family. Heterotrimer that consists of MR1, B2M and metabolite antigen. Major classes of metabolite ligands presented by MR1 include riboflavin-related antigens, pyrimidines and ribityl lumazines, nucleobase adducts and folate derivatives. Forms reversible covalent Schiff base complexes with microbial pyrimidine-based metabolite, which serves as a molecular switch triggering complete folding, stable association with B2M and translocation of the ternary complex from endoplasmic reticulum to the plasma membrane. Alternatively, forms non-Schiff base complexes with ribityl lumazines. On antigen-presenting cells, the ternary complex interacts with TCR on MR1-restricted T cells. Interacts with TAPBP and TAPBPL chaperones in the endoplasmic reticulum. TAPBP associated or not with MHC class I peptide loading complex binds ligand-free MR1 or MR1-B2M complex, providing for stable MR1 pools ready for metabolite antigen processing. TAPBPL interacts with MR1 in a ligand-independent way; this interaction may stabilize MR1 pool and facilitate ligand loading and dissociation. Structurally, MR1-B2M heterodimer adopts a topology similar to classical MHC class I molecules, with alpha-1 and alpha-2 domains of MR1 forming the antigen-binding cleft composed of two alpha-helices resting on a floor of 7-stranded anti-parallel beta-pleated sheet. MR1-B2M heterodimer (via alpha-helices) interacts with TCR (via CDR domains). In terms of processing, N-glycosylated.

Its subcellular location is the cell membrane. It is found in the endoplasmic reticulum membrane. It localises to the golgi apparatus membrane. The protein localises to the early endosome membrane. The protein resides in the late endosome membrane. In terms of biological role, antigen-presenting molecule specialized in displaying microbial pyrimidine-based metabolites to alpha-beta T cell receptors (TCR) on innate-type mucosal-associated invariant T (MAIT) cells. In complex with B2M preferentially presents riboflavin-derived metabolites to semi-invariant TCRs on MAIT cells, guiding immune surveillance of the microbial metabolome at mucosal epithelial barriers. Signature pyrimidine-based microbial antigens are generated via non-enzymatic condensation of metabolite intermediates of the riboflavin pathway with by-products arising from other metabolic pathways such as glycolysis. Typical potent antigenic metabolites are 5-(2-oxoethylideneamino)-6-D-ribitylaminouracil (5-OE-RU) and 5-(2-oxopropylideneamino)-6-D-ribitylaminouracil (5-OP-RU), products of condensation of 5-amino-6-D-ribityaminouracil (5-A-RU) with glyoxal or methylglyoxal by-products, respectively. May present microbial antigens to various MAIT cell subsets, providing for unique recognition of diverse microbes, including pathogens that do not synthesize riboflavin. Upon antigen recognition, elicits rapid innate-type MAIT cell activation to eliminate pathogenic microbes by directly killing infected cells. During T cell development, drives thymic selection and post-thymic terminal differentiation of MAIT cells in a process dependent on commensal microflora. Acts as an immune sensor of cancer cell metabolome. May present a tumor-specific or -associated metabolite essential for cancer cell survival to a pan-cancer TCR on a non-MAIT CD8-positive T cell clone, triggering T cell-mediated killing of a wide range of cancer cell types. May present tumor-enriched pyridoxal and pyridoxal 5'-phosphate antigens, enabling preferential recognition of cancer cells. Presents nucleobase carbonyl adducts generated during oxidative stress. Captures M3Ade, a nucleobase adduct composed of one adenine modified by a malondialdehyde trimer, for recognition by MR1-restricted T cell clones expressing a polyclonal TCR repertoire. This chain is Major histocompatibility complex class I-related protein 1, found in Bos taurus (Bovine).